The primary structure comprises 509 residues: Maturase K (509 aa).

Belongs to the intron maturase 2 family. MatK subfamily.

It is found in the plastid. The protein resides in the chloroplast. In terms of biological role, usually encoded in the trnK tRNA gene intron. Probably assists in splicing its own and other chloroplast group II introns. The polypeptide is Maturase K (Avicennia marina (Grey mangrove)).